The following is a 236-amino-acid chain: Ribosome assembly factor mrt4 (236 aa).

It belongs to the universal ribosomal protein uL10 family. In terms of assembly, associates with the pre-60S ribosomal particle.

The protein resides in the nucleus. The protein localises to the nucleolus. Its subcellular location is the cytoplasm. Its function is as follows. Component of the ribosome assembly machinery. Nuclear paralog of the ribosomal protein P0, it binds pre-60S subunits at an early stage of assembly in the nucleolus, and is replaced by P0 in cytoplasmic pre-60S subunits and mature 80S ribosomes. The chain is Ribosome assembly factor mrt4 from Eremothecium gossypii (strain ATCC 10895 / CBS 109.51 / FGSC 9923 / NRRL Y-1056) (Yeast).